The following is a 473-amino-acid chain: Serine/threonine-protein phosphatase 2A activator 1 (473 aa).

The interval 360–473 (NAVPPPTSAH…HVPTKAPWAK (114 aa)) is disordered. Positions 368–378 (AHMSTTQSQSR) are enriched in polar residues. Residues 395-416 (APWATATQAAPPAGAGTAAPWA) show a composition bias toward low complexity.

This sequence belongs to the PTPA-type PPIase family.

It localises to the cytoplasm. The protein resides in the nucleus. It carries out the reaction [protein]-peptidylproline (omega=180) = [protein]-peptidylproline (omega=0). Its function is as follows. PPIases accelerate the folding of proteins. It catalyzes the cis-trans isomerization of proline imidic peptide bonds in oligopeptides. Acts as a regulatory subunit for PP2A-like phosphatases modulating their activity or substrate specificity, probably by inducing a conformational change in the catalytic subunit, a direct target of the PPIase. Can reactivate inactive phosphatase PP2A-phosphatase methylesterase complexes (PP2Ai) in presence of ATP and Mg(2+) by dissociating the inactive form from the complex. The protein is Serine/threonine-protein phosphatase 2A activator 1 (rrd1) of Aspergillus fumigatus (strain ATCC MYA-4609 / CBS 101355 / FGSC A1100 / Af293) (Neosartorya fumigata).